The sequence spans 154 residues: Ribosome maturation factor RimP (154 aa).

Belongs to the RimP family.

It is found in the cytoplasm. Its function is as follows. Required for maturation of 30S ribosomal subunits. This chain is Ribosome maturation factor RimP, found in Prochlorococcus marinus (strain MIT 9303).